Here is an 89-residue protein sequence, read N- to C-terminus: UPF0175 protein APE_0276a (89 aa).

This sequence belongs to the UPF0175 family.

In Aeropyrum pernix (strain ATCC 700893 / DSM 11879 / JCM 9820 / NBRC 100138 / K1), this protein is UPF0175 protein APE_0276a.